The following is a 214-amino-acid chain: Octanoyltransferase (214 aa).

A BPL/LPL catalytic domain is found at 31–206 (KDDADEIWLL…QLAEQLGYNY (176 aa)). Substrate is bound by residues 70–77 (RGGQVTYH), 137–139 (SLG), and 150–152 (GLA). C168 serves as the catalytic Acyl-thioester intermediate.

Belongs to the LipB family.

It is found in the cytoplasm. The catalysed reaction is octanoyl-[ACP] + L-lysyl-[protein] = N(6)-octanoyl-L-lysyl-[protein] + holo-[ACP] + H(+). It functions in the pathway protein modification; protein lipoylation via endogenous pathway; protein N(6)-(lipoyl)lysine from octanoyl-[acyl-carrier-protein]: step 1/2. Catalyzes the transfer of endogenously produced octanoic acid from octanoyl-acyl-carrier-protein onto the lipoyl domains of lipoate-dependent enzymes. Lipoyl-ACP can also act as a substrate although octanoyl-ACP is likely to be the physiological substrate. In Marinomonas sp. (strain MWYL1), this protein is Octanoyltransferase.